The following is a 100-amino-acid chain: Urease subunit gamma (100 aa).

It belongs to the urease gamma subunit family. In terms of assembly, heterotrimer of UreA (gamma), UreB (beta) and UreC (alpha) subunits. Three heterotrimers associate to form the active enzyme.

It localises to the cytoplasm. It catalyses the reaction urea + 2 H2O + H(+) = hydrogencarbonate + 2 NH4(+). Its pathway is nitrogen metabolism; urea degradation; CO(2) and NH(3) from urea (urease route): step 1/1. The sequence is that of Urease subunit gamma from Prochlorococcus marinus (strain NATL2A).